The following is a 632-amino-acid chain: Probable potassium transport system protein Kup (632 aa).

A run of 12 helical transmembrane segments spans residues 19–39, 59–79, 110–130, 146–166, 178–198, 221–241, 256–276, 298–318, 346–366, 375–395, 403–423, and 428–448; these read LVVG…LYSL, IISM…VMFV, LIMM…VITP, PGLS…LFFI, FGPI…IHLV, LQAF…EALY, WFVL…AMLL, MVLL…SGAF, IYMP…VLAF, AYGI…ALVM, PALV…FFAA, and IAEG…LLMT.

The protein belongs to the HAK/KUP transporter (TC 2.A.72) family.

It localises to the cell inner membrane. It catalyses the reaction K(+)(in) + H(+)(in) = K(+)(out) + H(+)(out). In terms of biological role, transport of potassium into the cell. Likely operates as a K(+):H(+) symporter. The sequence is that of Probable potassium transport system protein Kup from Cupriavidus metallidurans (strain ATCC 43123 / DSM 2839 / NBRC 102507 / CH34) (Ralstonia metallidurans).